A 118-amino-acid chain; its full sequence is MAAALARLGLRPVKLVRVQFCPFEKNVESTRTFLQTVSSEKVRATNLNCSVIADVRHDGSEPCVDVLFGDGYRLIMRGAHLTTQEMLSALASHIRDRNAAAASAPGADKVAPGTSTRR.

Positions 99-118 (AAAASAPGADKVAPGTSTRR) are disordered.

Belongs to the mitochondrion-specific ribosomal protein mL53 family. Component of the mitochondrial ribosome large subunit (39S) which comprises a 16S rRNA and about 50 distinct proteins.

The protein localises to the mitochondrion. This chain is Large ribosomal subunit protein mL53 (Mrpl53), found in Mus musculus (Mouse).